Consider the following 146-residue polypeptide: MSHKILLVNGPNLNLLGRREPSVYGHQTLADIVAELNQQAKLAEVELEHIQSNAEFELINAIHATDAQMIIINPAAFTHTSVALRDALLGVAIPFFEVHLSNVHAREAFRHHSYFSDKAIGVICGFGSQGYEFALAAAIKRLNQPQ.

Catalysis depends on Tyr24, which acts as the Proton acceptor. Positions 73, 79, and 86 each coordinate substrate. The active-site Proton donor is the His99. Residues 100-101 (LS) and Arg110 each bind substrate.

This sequence belongs to the type-II 3-dehydroquinase family. Homododecamer.

It carries out the reaction 3-dehydroquinate = 3-dehydroshikimate + H2O. Its pathway is metabolic intermediate biosynthesis; chorismate biosynthesis; chorismate from D-erythrose 4-phosphate and phosphoenolpyruvate: step 3/7. Its function is as follows. Catalyzes a trans-dehydration via an enolate intermediate. The sequence is that of 3-dehydroquinate dehydratase from Shewanella baltica (strain OS223).